The chain runs to 485 residues: Glutamyl-tRNA(Gln) amidotransferase subunit A (485 aa).

Catalysis depends on charge relay system residues Lys79 and Ser154. Ser178 functions as the Acyl-ester intermediate in the catalytic mechanism.

This sequence belongs to the amidase family. GatA subfamily. Heterotrimer of A, B and C subunits.

The catalysed reaction is L-glutamyl-tRNA(Gln) + L-glutamine + ATP + H2O = L-glutaminyl-tRNA(Gln) + L-glutamate + ADP + phosphate + H(+). In terms of biological role, allows the formation of correctly charged Gln-tRNA(Gln) through the transamidation of misacylated Glu-tRNA(Gln) in organisms which lack glutaminyl-tRNA synthetase. The reaction takes place in the presence of glutamine and ATP through an activated gamma-phospho-Glu-tRNA(Gln). In Clostridium botulinum (strain Okra / Type B1), this protein is Glutamyl-tRNA(Gln) amidotransferase subunit A.